Reading from the N-terminus, the 279-residue chain is Large ribosomal subunit protein uL2 (279 aa).

Basic residues-rich tracts occupy residues 211-221 (GRSRWRGKTPH) and 256-279 (SYGK…RKGK). The segment at 211–279 (GRSRWRGKTP…KFIVRGRKGK (69 aa)) is disordered.

It belongs to the universal ribosomal protein uL2 family. Part of the 50S ribosomal subunit. Forms a bridge to the 30S subunit in the 70S ribosome.

In terms of biological role, one of the primary rRNA binding proteins. Required for association of the 30S and 50S subunits to form the 70S ribosome, for tRNA binding and peptide bond formation. It has been suggested to have peptidyltransferase activity; this is somewhat controversial. Makes several contacts with the 16S rRNA in the 70S ribosome. In Oenococcus oeni (strain ATCC BAA-331 / PSU-1), this protein is Large ribosomal subunit protein uL2.